Here is a 554-residue protein sequence, read N- to C-terminus: Glutamine--tRNA ligase (554 aa).

The 'HIGH' region signature appears at 34–44; the sequence is PEPNGYLHIGH. ATP contacts are provided by residues 35–37 and 41–47; these read EPN and HIGHAKS. L-glutamine-binding residues include Asp-67 and Tyr-212. ATP is bound by residues Thr-231, 261-262, and 269-271; these read RL and MSK. Residues 268–272 carry the 'KMSKS' region motif; the sequence is VMSKR. Positions 317 to 324 are interaction with tRNA; the sequence is TKQDNTIE.

The protein belongs to the class-I aminoacyl-tRNA synthetase family. As to quaternary structure, monomer.

It localises to the cytoplasm. It catalyses the reaction tRNA(Gln) + L-glutamine + ATP = L-glutaminyl-tRNA(Gln) + AMP + diphosphate. The protein is Glutamine--tRNA ligase of Escherichia coli O7:K1 (strain IAI39 / ExPEC).